Consider the following 415-residue polypeptide: Very late expression factor 1 (415 aa).

The 187-residue stretch at Arg-171–Asp-357 folds into the Tyr recombinase domain. Active-site residues include Arg-214, Lys-242, Arg-307, and His-330. Positions Tyr-339 to Asn-415 are disordered. Residue Tyr-343 is the O-(3'-phospho-DNA)-tyrosine intermediate of the active site. The span at Gly-346 to Asp-363 shows a compositional bias: acidic residues. Over residues Asn-375 to Ser-404 the composition is skewed to low complexity.

It belongs to the 'phage' integrase family.

Its function is as follows. Involved in very late gene activation. The chain is Very late expression factor 1 (VLF-1) from Heliothis zea nuclear polyhedrosis virus (HzSNPV).